The following is a 113-amino-acid chain: MSSLQKRPGPGNSSQPTERPRKESILDLSRYQDQRIQATFTGGRQITGILKGFDQLMNLVLDDVEEQLRNPEDGKLTGAIRKLGLVVVRGTTLVLIAPMDGSEEIPNPFVQAE.

Residues 1 to 17 (MSSLQKRPGPGNSSQPT) show a composition bias toward polar residues. Positions 1 to 23 (MSSLQKRPGPGNSSQPTERPRKE) are disordered. One can recognise a Sm domain in the interval 23–102 (ESILDLSRYQ…LVLIAPMDGS (80 aa)).

It belongs to the snRNP Sm proteins family. As to quaternary structure, component of the heptameric LSM1-LSM7 complex that forms a seven-membered ring structure with a donut shape. The LSm subunits are arranged in the order lsm1, lsm2, lsm3, lsm6, lsm5, lsm7 and lsm4. Component of the heptameric LSM2-LSM8 complex that forms a seven-membered ring structure with a donut shape. The LSm subunits are arranged in the order lsm8, lsm2, lsm3, lsm6, lsm5, lsm7 and lsm4.

The protein localises to the cytoplasm. It localises to the nucleus. Component of LSm protein complexes, which are involved in RNA processing and may function in a chaperone-like manner. Component of the cytoplasmic LSM1-LSM7 complex which is involved in mRNA degradation by activating the decapping step. The LSM1-LSM7 complex loads onto the 3'-end of single stranded RNA. Component of the nuclear LSM2-LSM8 complex, which is involved in spliceosome assembly. The LSM2-LSM8 complex plays a role in the biogenesis of the spliceosomal U4/U6-U5 tri-snRNP complex by accelerating prp24-mediated annealing of U4/U6 di-snRNA. The LSM2-LSM8 complex binds U6 snRNA terminating with a cyclic 2',3' phosphate group; RNA with an unmodified 3' hydroxyl or non-cyclic 3' phosphate is bound less tightly. The polypeptide is LSM complex subunit lsm7 (lsm7) (Schizosaccharomyces pombe (strain 972 / ATCC 24843) (Fission yeast)).